A 332-amino-acid chain; its full sequence is 2,3-diketo-L-gulonate reductase (332 aa).

The active-site Proton donor is the His-44. NAD(+) contacts are provided by residues 168-174, 224-225, and 304-306; these read ITMIDMS, WK, and GHE.

The protein belongs to the LDH2/MDH2 oxidoreductase family. DlgD subfamily. Homodimer.

The protein resides in the cytoplasm. It catalyses the reaction 3-dehydro-L-gulonate + NAD(+) = 2,3-dioxo-L-gulonate + NADH + H(+). The catalysed reaction is 3-dehydro-L-gulonate + NADP(+) = 2,3-dioxo-L-gulonate + NADPH + H(+). Catalyzes the reduction of 2,3-diketo-L-gulonate in the presence of NADH, to form 3-keto-L-gulonate. This Citrobacter koseri (strain ATCC BAA-895 / CDC 4225-83 / SGSC4696) protein is 2,3-diketo-L-gulonate reductase.